Reading from the N-terminus, the 976-residue chain is Vacuolar membrane protease (976 aa).

Residues 1–15 (MKLKSVFRSVLKYRK) are Cytoplasmic-facing. Residues 16-36 (TNLSLLLLITYSIITLLYIFD) traverse the membrane as a helical segment. Over 37 to 359 (HERYKLNLPK…KFFVISAKTL (323 aa)) the chain is Vacuolar. N-linked (GlcNAc...) asparagine glycans are attached at residues N96 and N121. H156 and D168 together coordinate Zn(2+). Residue N189 is glycosylated (N-linked (GlcNAc...) asparagine). Residue E200 is the Proton acceptor of the active site. Zn(2+) is bound at residue E201. N-linked (GlcNAc...) asparagine glycans are attached at residues N212 and N217. Zn(2+) contacts are provided by E226 and H300. Residues 360 to 380 (FYWNCIFLLVSPVVAIGLYLI) traverse the membrane as a helical segment. The Cytoplasmic segment spans residues 381–392 (SRDRMTWKSHSW). Residues 393-412 (LSWTRFPLSLAAGIIVQKLF) form a helical membrane-spanning segment. Residues 413-428 (SNDIIRSNPLTFSRNY) lie on the Vacuolar side of the membrane. The chain crosses the membrane as a helical span at residues 429–449 (FWPISAFFTQVIFTSYVLINC). At 450–461 (SNFFFPCADMKS) the chain is on the cytoplasmic side. Residues 462-482 (LSIIELFIILWTILLFTSKLL) traverse the membrane as a helical segment. Over 483 to 496 (YSSDYRYTGLYPLS) the chain is Vacuolar. Residues 497 to 517 (IFFLLSTIAAILRLLALALGM) form a helical membrane-spanning segment. Over 518–627 (RTRKRLGREC…NSLKLEYTDY (110 aa)) the chain is Cytoplasmic. The interval 528–610 (RDHHSNYSSH…PLLKGSNSME (83 aa)) is disordered. Residues 549–558 (NLEQPQDQFT) show a composition bias toward polar residues. Residues 559–570 (SSQDDQASIQDD) show a composition bias toward low complexity. Residues 582–601 (NVDEDHGMDSSSQQHDERVP) are compositionally biased toward basic and acidic residues. Residues 628 to 648 (AWIIQFLLIVPIPSFILFNSV) form a helical membrane-spanning segment. Topologically, residues 649 to 668 (DVIMDALNHTVQEGSKATFD) are vacuolar. N-linked (GlcNAc...) asparagine glycosylation occurs at N656. Residues 669–689 (VLRFGMVGSILMALPILPFFY) form a helical membrane-spanning segment. The Cytoplasmic portion of the chain corresponds to 690-692 (KVN). A helical membrane pass occupies residues 693–713 (YITISLTALLFLISASKTLLV). The Vacuolar portion of the chain corresponds to 714 to 976 (HPFTNSNPLK…LVIVKDAIIL (263 aa)). N-linked (GlcNAc...) asparagine glycosylation is found at N768, N796, N811, N866, and N937.

The protein belongs to the peptidase M28 family. Requires Zn(2+) as cofactor.

The protein resides in the vacuole membrane. Its function is as follows. May be involved in vacuolar sorting and osmoregulation. This is Vacuolar membrane protease from Saccharomyces cerevisiae (strain YJM789) (Baker's yeast).